The following is a 120-amino-acid chain: MLLLYEYDIFWAFLIISSLIPILAFFLSGVLAPISKGPEKFSSYESGIEPIGDAWLQFRIRYYMFALVFVVFDVETVFLYPWSMSFDVLGVSVFIEAFIFVLILIVGLVYAWRKGALEWS.

The next 3 membrane-spanning stretches (helical) occupy residues 9–29, 62–82, and 88–108; these read IFWA…FLSG, YYMF…LYPW, and VLGV…IVGL.

It belongs to the complex I subunit 3 family. As to quaternary structure, NDH is composed of at least 16 different subunits, 5 of which are encoded in the nucleus.

Its subcellular location is the plastid. The protein localises to the chloroplast thylakoid membrane. The enzyme catalyses a plastoquinone + NADH + (n+1) H(+)(in) = a plastoquinol + NAD(+) + n H(+)(out). It catalyses the reaction a plastoquinone + NADPH + (n+1) H(+)(in) = a plastoquinol + NADP(+) + n H(+)(out). Functionally, NDH shuttles electrons from NAD(P)H:plastoquinone, via FMN and iron-sulfur (Fe-S) centers, to quinones in the photosynthetic chain and possibly in a chloroplast respiratory chain. The immediate electron acceptor for the enzyme in this species is believed to be plastoquinone. Couples the redox reaction to proton translocation, and thus conserves the redox energy in a proton gradient. In Trachelium caeruleum (Blue throatwort), this protein is NAD(P)H-quinone oxidoreductase subunit 3, chloroplastic.